Reading from the N-terminus, the 305-residue chain is Fatty acid elongase 1 (305 aa).

7 consecutive transmembrane segments (helical) span residues 24-44, 80-100, 129-149, 158-178, 183-203, 217-237, and 257-277; these read MIAN…FVFI, VVWN…VTPV, FWMG…IFLV, FLHW…YCVG, IWVA…FALA, YITI…IFAL, and IQLV…VASY. The short motif at 160–164 is the HxxHH motif element; sequence HWYHH. His163 serves as the catalytic Nucleophile. The tract at residues 284-305 is disordered; it reads PTVGGPSSTAGVSNGSVEKKVK. The span at 288 to 299 shows a compositional bias: polar residues; the sequence is GPSSTAGVSNGS. Asn297 carries N-linked (GlcNAc...) asparagine glycosylation.

This sequence belongs to the ELO family.

It localises to the endoplasmic reticulum membrane. The enzyme catalyses an acyl-CoA + malonyl-CoA + H(+) = a 3-oxoacyl-CoA + CO2 + CoA. The protein operates within lipid metabolism; fatty acid biosynthesis. Functionally, involved in the synthesis of fatty acids. Elongates C4 fatty acids to C10. The chain is Fatty acid elongase 1 from Trypanosoma brucei brucei (strain 927/4 GUTat10.1).